We begin with the raw amino-acid sequence, 154 residues long: CASP-like protein ARALYDRAFT_485429 (154 aa).

Over 1 to 12 (MENVPGSFGTSA) the chain is Cytoplasmic. The helical transmembrane segment at 13-33 (SFALRFGQTIFSAASLIFMCF) threads the bilayer. Topologically, residues 34–41 (DYDFYDFT) are extracellular. A helical transmembrane segment spans residues 42–62 (TFCYLATVMAIVTPWSILLAL). The Cytoplasmic portion of the chain corresponds to 63–81 (TDTYSVLVKLLPQELRVLS). Residues 82–102 (IVFAGDFVLSFLSLGGACAVA) traverse the membrane as a helical segment. Residues 103–128 (SATELLASADGKICDGNLCIQYQVSA) are Extracellular-facing. The helical transmembrane segment at 129-149 (ALAFLCWFLLLASALFNFWSL) threads the bilayer. At 150-154 (PSLYY) the chain is on the cytoplasmic side.

Belongs to the Casparian strip membrane proteins (CASP) family. In terms of assembly, homodimer and heterodimers.

It is found in the cell membrane. The chain is CASP-like protein ARALYDRAFT_485429 from Arabidopsis lyrata subsp. lyrata (Lyre-leaved rock-cress).